A 195-amino-acid chain; its full sequence is Transcriptional regulator LdrP (195 aa).

Residues G110–A182 form the HTH crp-type domain. Residues H142–A161 constitute a DNA-binding region (H-T-H motif).

Activates transcription. Positively regulates PcrtB promoter upstream of the crtB operon in a cAMP-independent manner. Regulated genes include genes encoding DNA photolyase, phytoene synthase and cytochrome P450 monooxygenase, which are involved in carotenoid biosynthesis. Positively regulates the light-inducible gene cluster in the megaplasmid in a cAMP-independent manner. The polypeptide is Transcriptional regulator LdrP (Thermus thermophilus (strain ATCC BAA-163 / DSM 7039 / HB27)).